The following is a 217-amino-acid chain: 3-isopropylmalate dehydratase small subunit (217 aa).

The protein belongs to the LeuD family. LeuD type 1 subfamily. As to quaternary structure, heterodimer of LeuC and LeuD.

It carries out the reaction (2R,3S)-3-isopropylmalate = (2S)-2-isopropylmalate. It participates in amino-acid biosynthesis; L-leucine biosynthesis; L-leucine from 3-methyl-2-oxobutanoate: step 2/4. Functionally, catalyzes the isomerization between 2-isopropylmalate and 3-isopropylmalate, via the formation of 2-isopropylmaleate. The chain is 3-isopropylmalate dehydratase small subunit from Paracidovorax citrulli (strain AAC00-1) (Acidovorax citrulli).